A 297-amino-acid chain; its full sequence is uncharacterized protein (297 aa).

The active site involves Glu-46.

Belongs to the PhzF family. As to quaternary structure, homodimer and homotetramer.

This is an uncharacterized protein from Salmonella typhimurium (strain LT2 / SGSC1412 / ATCC 700720).